The sequence spans 155 residues: 6,7-dimethyl-8-ribityllumazine synthase (155 aa).

5-amino-6-(D-ribitylamino)uracil-binding positions include Phe-24, 58–60, and 82–84; these read AFE and AII. 87-88 contributes to the (2S)-2-hydroxy-3-oxobutyl phosphate binding site; that stretch reads ST. The Proton donor role is filled by His-90. Phe-115 contributes to the 5-amino-6-(D-ribitylamino)uracil binding site. Arg-129 serves as a coordination point for (2S)-2-hydroxy-3-oxobutyl phosphate.

It belongs to the DMRL synthase family.

It carries out the reaction (2S)-2-hydroxy-3-oxobutyl phosphate + 5-amino-6-(D-ribitylamino)uracil = 6,7-dimethyl-8-(1-D-ribityl)lumazine + phosphate + 2 H2O + H(+). It participates in cofactor biosynthesis; riboflavin biosynthesis; riboflavin from 2-hydroxy-3-oxobutyl phosphate and 5-amino-6-(D-ribitylamino)uracil: step 1/2. In terms of biological role, catalyzes the formation of 6,7-dimethyl-8-ribityllumazine by condensation of 5-amino-6-(D-ribitylamino)uracil with 3,4-dihydroxy-2-butanone 4-phosphate. This is the penultimate step in the biosynthesis of riboflavin. In Chlorobium luteolum (strain DSM 273 / BCRC 81028 / 2530) (Pelodictyon luteolum), this protein is 6,7-dimethyl-8-ribityllumazine synthase.